A 374-amino-acid polypeptide reads, in one-letter code: Alginate lyase (374 aa).

The signal sequence occupies residues M1–A26. Substrate-binding positions include S67–K68, H140–T141, and Y258.

It belongs to the polysaccharide lyase 5 family.

The protein resides in the periplasm. It catalyses the reaction Eliminative cleavage of alginate to give oligosaccharides with 4-deoxy-alpha-L-erythro-hex-4-enuronosyl groups at their non-reducing ends and beta-D-mannuronate at their reducing end.. Functionally, catalyzes the depolymerization of alginate by cleaving the beta-1,4 glycosidic bond between two adjacent sugar residues via a beta-elimination mechanism. May serve to degrade mislocalized alginate that is trapped in the periplasmic space. The protein is Alginate lyase of Cobetia marina (Deleya marina).